Consider the following 527-residue polypeptide: Rhamnogalacturonate lyase A (527 aa).

Residues 1–20 (MLSKTFLLSSAVLWARVANA) form the signal peptide. Asn27 and Asn46 each carry an N-linked (GlcNAc...) asparagine glycan. 2 cysteine pairs are disulfide-bonded: Cys50-Cys93 and Cys184-Cys193. Asn351 carries an N-linked (GlcNAc...) asparagine glycan.

This sequence belongs to the polysaccharide lyase 4 family.

It is found in the secreted. The catalysed reaction is Endotype eliminative cleavage of L-alpha-rhamnopyranosyl-(1-&gt;4)-alpha-D-galactopyranosyluronic acid bonds of rhamnogalacturonan I domains in ramified hairy regions of pectin leaving L-rhamnopyranose at the reducing end and 4-deoxy-4,5-unsaturated D-galactopyranosyluronic acid at the non-reducing end.. Functionally, pectinolytic enzymes consist of four classes of enzymes: pectin lyase, polygalacturonase, pectin methylesterase and rhamnogalacturonase. Degrades the rhamnogalacturonan I (RG-I) backbone of pectin. Active against linseed rhamnogalacturonan. This Emericella nidulans (strain FGSC A4 / ATCC 38163 / CBS 112.46 / NRRL 194 / M139) (Aspergillus nidulans) protein is Rhamnogalacturonate lyase A (rglA).